The chain runs to 548 residues: Frizzled-7-B (548 aa).

The first 18 residues, 1-18 (MLAPVSLLFCLFLQLCPS), serve as a signal peptide directing secretion. The Extracellular portion of the chain corresponds to 19–230 (AQQYHGEKGI…EEEVRFARLW (212 aa)). Positions 31–150 (PDHGFCQPIS…HGAGEICVGQ (120 aa)) constitute an FZ domain. Intrachain disulfides connect Cys-36-Cys-97, Cys-44-Cys-90, Cys-81-Cys-118, Cys-107-Cys-147, and Cys-111-Cys-135. N-linked (GlcNAc...) asparagine glycosylation occurs at Asn-50. N-linked (GlcNAc...) asparagine glycosylation is present at Asn-151. A helical transmembrane segment spans residues 231 to 251 (VGIWAILCGISTLFTVLTYLV). Over 252–262 (DMRRFSYPERP) the chain is Cytoplasmic. The chain crosses the membrane as a helical span at residues 263–283 (IIFLSGCYFMVAVAYTAGFLL). Residues 284–311 (EERAVCVERFSEDSYRTVAQGTKKEGCT) are Extracellular-facing. The helical transmembrane segment at 312 to 332 (ILFMILYFFGMASSIWWVILA) threads the bilayer. At 333 to 353 (LTWFLSAGMKWGHEAIEANSQ) the chain is on the cytoplasmic side. Residues 354–374 (YFHLAAWAVPAVKTITILAMG) form a helical membrane-spanning segment. The Extracellular portion of the chain corresponds to 375–397 (QVDGDVLSGVCYVGINSVDSLRG). The helical transmembrane segment at 398 to 418 (FVLAPLFVYLFLGTSFLLAGF) threads the bilayer. The Cytoplasmic portion of the chain corresponds to 419-444 (VSLFRIRTIMKHDGTKTEKLEKLMVR). Residues 445 to 465 (IGVFSVMYTVPATIVLACYFY) form a helical membrane-spanning segment. At 466–502 (EQAFRDTWEKTWLVHTCKGYAVPCPNYNFAPMSPDFT) the chain is on the extracellular side. Residues 503-523 (VFMIKYLMTMIVGITSSFWIW) form a helical membrane-spanning segment. Over 524–548 (SGKTLQSWRRFYHRLGNGSKGETAV) the chain is Cytoplasmic. Positions 526–531 (KTLQSW) match the Lys-Thr-X-X-X-Trp motif, mediates interaction with the PDZ domain of Dvl family members motif. Residues 546–548 (TAV) carry the PDZ-binding motif.

It belongs to the G-protein coupled receptor Fz/Smo family. As to quaternary structure, interacts with wnt11 and sdc4. The extracellular domain interacts with the extracellular domain of pcdh8/papc. Interacts (via C-terminus) with dvl1 (via PDZ domain). In terms of tissue distribution, during gastrulation, broadly expressed on the dorsal side of the embryo in deep mesodermal cells surrounding the blastopore lip and in presumptive anterior neuroectoderm. During neurulation, localized to the cranial neural crest and heart field where expression is retained at later stages in addition to new areas of expression in the neural tube, pronephros and tailbud. At tailbud stage, expressed in the pronephric duct, and broad head expression becomes more restricted to the hindbrain. In tadpoles, strongly expressed in the eye and the pericardium and myocardium of the developing heart.

It localises to the cell membrane. The protein resides in the endosome membrane. In terms of biological role, receptor for Wnt proteins. Acts in both canonical and non-canonical Wnt pathways. Although different papers report differing Wnt preferences, wnt5a, wnt8b and wnt11 have been proposed as synergists. In the canonical Wnt pathway, acts via beta-catenin to promote the expression of the dorsal genes siamois, twin and nodal3 and to establish the dorsal axis of the embryo and induce dorsal mesoderm formation. In a non-canonical Wnt/planar cell polarity (PCP) pathway, acts with sdc4 and dvl2/dsh to regulate convergent extension cell movements during gastrulation. Triggers phosphorylation of dvl2/dsh and its translocation to the plasma membrane. In a third branch of Wnt signaling, acts in a non-canonical pathway via trimeric G proteins, and independently of dvl2/dsh, to recruit protein kinase C (PKC) to the membrane and thus activate PKC. PKC signaling controls cell sorting and tissue separation during gastrulation. The protein is Frizzled-7-B (fzd7-b) of Xenopus laevis (African clawed frog).